We begin with the raw amino-acid sequence, 923 residues long: Dynein axonemal intermediate chain 3 (923 aa).

Positions 1–35 are disordered; sequence MAPKPPKSPKGQKKGKKNMKQQLLVPEEEEPMNME. The span at 10 to 19 shows a compositional bias: basic residues; the sequence is KGQKKGKKNM. WD repeat units follow at residues 398-438, 480-536, 702-741, and 745-785; these read ESPD…DRIE, GHRK…PAVT, VHDG…GPLL, and CGPK…HEPA. A coiled-coil region spans residues 869–889; sequence LELVKKKAKIYQKTKEQMEAE.

Interacts with ACTR2; this interaction reduces binding of the Arp2/3 complex to the VCA domain of nucleation promoting factors. Part of the multisubunit axonemal dynein complex formed at least of two heavy chains and a number of intermediate and light chains. Found in a associated with the catalytic heavy chain DNAH2, the intermediate chain DNAI4, and the light chain DYNLT1. Strongly expressed in the testes. Detected also in brain and lung tissues.

The protein resides in the cytoplasm. In terms of biological role, acts as a negative regulator of cell migration, invasion, and metastasis downstream of p53/TP53, through inhibition of Arp2/3 complex-mediated actin polymerization. Via its association with the multisubunit axonemal dynein complex, is potentially involved in the regulation of cilia function. May play a role in osteogenesis of dental tissue-derived mesenchymal stem cells. The protein is Dynein axonemal intermediate chain 3 (Dnai3) of Mus musculus (Mouse).